A 90-amino-acid chain; its full sequence is Small ribosomal subunit protein bS16 (90 aa).

Belongs to the bacterial ribosomal protein bS16 family.

This is Small ribosomal subunit protein bS16 from Clostridioides difficile (strain 630) (Peptoclostridium difficile).